Here is a 434-residue protein sequence, read N- to C-terminus: 3-phosphoshikimate 1-carboxyvinyltransferase (434 aa).

3-phosphoshikimate is bound by residues Lys22, Ser23, and Arg27. Lys22 serves as a coordination point for phosphoenolpyruvate. Phosphoenolpyruvate-binding residues include Gly93 and Arg121. 3-phosphoshikimate is bound by residues Ser168, Ser169, Gln170, Ser199, Asp320, and Lys347. Position 170 (Gln170) interacts with phosphoenolpyruvate. Asp320 functions as the Proton acceptor in the catalytic mechanism. Positions 351, 394, and 419 each coordinate phosphoenolpyruvate.

Belongs to the EPSP synthase family. In terms of assembly, monomer.

The protein localises to the cytoplasm. It carries out the reaction 3-phosphoshikimate + phosphoenolpyruvate = 5-O-(1-carboxyvinyl)-3-phosphoshikimate + phosphate. It participates in metabolic intermediate biosynthesis; chorismate biosynthesis; chorismate from D-erythrose 4-phosphate and phosphoenolpyruvate: step 6/7. Its function is as follows. Catalyzes the transfer of the enolpyruvyl moiety of phosphoenolpyruvate (PEP) to the 5-hydroxyl of shikimate-3-phosphate (S3P) to produce enolpyruvyl shikimate-3-phosphate and inorganic phosphate. This is 3-phosphoshikimate 1-carboxyvinyltransferase from Burkholderia multivorans (strain ATCC 17616 / 249).